An 847-amino-acid polypeptide reads, in one-letter code: Alanine--tRNA ligase (847 aa).

Zn(2+)-binding residues include His-554, His-558, Cys-656, and His-660.

It belongs to the class-II aminoacyl-tRNA synthetase family. Zn(2+) serves as cofactor.

The protein resides in the cytoplasm. The enzyme catalyses tRNA(Ala) + L-alanine + ATP = L-alanyl-tRNA(Ala) + AMP + diphosphate. Functionally, catalyzes the attachment of alanine to tRNA(Ala) in a two-step reaction: alanine is first activated by ATP to form Ala-AMP and then transferred to the acceptor end of tRNA(Ala). Also edits incorrectly charged Ser-tRNA(Ala) and Gly-tRNA(Ala) via its editing domain. The polypeptide is Alanine--tRNA ligase (Helicobacter pylori (strain J99 / ATCC 700824) (Campylobacter pylori J99)).